Consider the following 242-residue polypeptide: Zinc-finger homeodomain protein 11 (242 aa).

The ZF-HD dimerization-type; degenerate zinc finger occupies 31–82 (YKECLKNHAANLGGHALDGCGEFMPSPTATSTDPSSLRCAACGCHRNFHRRD). Disordered stretches follow at residues 83-109 (PSENLNFLTAPPISSPSGTESPPSRHV) and 135-161 (PGPSDQDPTVVRSENSSRGAMRKRTRT). Residues 156-213 (RKRTRTKFTPEQKIKMRAFAEKAGWKINGCDEKSVREFCNEVGIERGVLKVWMHNNKY) constitute a DNA-binding region (homeobox; atypical).

As to quaternary structure, homo- and heterodimer with other ZFHD proteins. Interacts with HIPP20, HIPP21, HIPP22, HIPP23, HIPP24, HIPP26, HIPP27, HIPP30 and MED25 (via ACID domain). Interacts with NAC019, NAC055 and NAC072 (via NAC binding domain). Binds to ZHD1, ZHD2, ZHD3, ZHD4, ZHD5, ZHD6, ZHD7, ZHD8, ZHD9, ZHD12, ZHD13 and ZHD14. In terms of tissue distribution, expressed in roots, inflorescences, open flowers and seeds. Detected in stems and seedlings.

The protein localises to the nucleus. Its function is as follows. Transcription factor involved in the up-regulation of several stress-inducible genes. Acts as a transcriptional activator by interacting with MED25 and NAC proteins. Involved in increased drought tolerance. The polypeptide is Zinc-finger homeodomain protein 11 (ZHD11) (Arabidopsis thaliana (Mouse-ear cress)).